Consider the following 251-residue polypeptide: N-acetylmuramoyl-L-alanine amidase CwlA (251 aa).

Positions 1–37 are cleaved as a signal peptide; sequence MEIKQMLVPVSRYSVLCPYEMNPTEITFHNTYNDAPA. An N-acetylmuramoyl-L-alanine amidase domain is found at 38–140; that stretch reads INERNNVANN…QERNGKYCPH (103 aa).

This sequence belongs to the N-acetylmuramoyl-L-alanine amidase 2 family.

It is found in the secreted. The enzyme catalyses Hydrolyzes the link between N-acetylmuramoyl residues and L-amino acid residues in certain cell-wall glycopeptides.. Its function is as follows. Autolysins are involved in some important biological processes such as cell separation, cell-wall turnover, competence for genetic transformation, formation of the flagella and sporulation. The chain is N-acetylmuramoyl-L-alanine amidase CwlA (cwlA) from Bacillus sp.